The chain runs to 106 residues: ATP-dependent Clp protease adapter protein ClpS (106 aa).

The protein belongs to the ClpS family. As to quaternary structure, binds to the N-terminal domain of the chaperone ClpA.

Involved in the modulation of the specificity of the ClpAP-mediated ATP-dependent protein degradation. The sequence is that of ATP-dependent Clp protease adapter protein ClpS from Sodalis glossinidius (strain morsitans).